Reading from the N-terminus, the 190-residue chain is Ribosome maturation factor RimM (190 aa).

The PRC barrel domain maps to 102 to 190 (EDEYYWIDLV…RIDSDWPLED (89 aa)).

It belongs to the RimM family. Binds ribosomal protein uS19.

It localises to the cytoplasm. Functionally, an accessory protein needed during the final step in the assembly of 30S ribosomal subunit, possibly for assembly of the head region. Essential for efficient processing of 16S rRNA. May be needed both before and after RbfA during the maturation of 16S rRNA. It has affinity for free ribosomal 30S subunits but not for 70S ribosomes. The protein is Ribosome maturation factor RimM of Bordetella avium (strain 197N).